Consider the following 91-residue polypeptide: Tachykinin-like peptide (91 aa).

Residues 1 to 19 form the signal peptide; sequence MKILVAFAVIMLVSAQVLA. Positions 20–51 are excised as a propeptide; the sequence is AEIGLNDEPEWYSDQIQEDLPVFENFLQRIAR. Met-62 is subject to Methionine amide. Positions 64-91 are disordered; sequence KRNNGFGQMSRKRSAERNTIHNYERRRK. Residues 66–91 constitute a propeptide that is removed on maturation; the sequence is NNGFGQMSRKRSAERNTIHNYERRRK. A compositionally biased stretch (basic and acidic residues) spans 76 to 91; it reads RSAERNTIHNYERRRK.

Expressed by the skin glands.

It is found in the secreted. In terms of biological role, tachykinins are active peptides which excite neurons, evoke behavioral responses, are potent vasodilators and secretagogues, and contract (directly or indirectly) many smooth muscles. In vitro, induces contraction of guinea pig ileum smooth muscle in a dose-dependent manner. In Theloderma corticale (Kwangsi warty tree frog), this protein is Tachykinin-like peptide.